We begin with the raw amino-acid sequence, 178 residues long: NADH-quinone oxidoreductase subunit I 2 (178 aa).

4Fe-4S ferredoxin-type domains lie at 46–78 (IVLT…MQAA) and 88–117 (AWFR…LTPF). 8 residues coordinate [4Fe-4S] cluster: Cys-58, Cys-61, Cys-64, Cys-68, Cys-97, Cys-100, Cys-103, and Cys-107.

It belongs to the complex I 23 kDa subunit family. NDH-1 is composed of 14 different subunits. Subunits NuoA, H, J, K, L, M, N constitute the membrane sector of the complex. The cofactor is [4Fe-4S] cluster.

Its subcellular location is the cell inner membrane. The enzyme catalyses a quinone + NADH + 5 H(+)(in) = a quinol + NAD(+) + 4 H(+)(out). In terms of biological role, NDH-1 shuttles electrons from NADH, via FMN and iron-sulfur (Fe-S) centers, to quinones in the respiratory chain. The immediate electron acceptor for the enzyme in this species is believed to be ubiquinone. Couples the redox reaction to proton translocation (for every two electrons transferred, four hydrogen ions are translocated across the cytoplasmic membrane), and thus conserves the redox energy in a proton gradient. The protein is NADH-quinone oxidoreductase subunit I 2 of Syntrophobacter fumaroxidans (strain DSM 10017 / MPOB).